A 373-amino-acid chain; its full sequence is STE20-related kinase adapter protein alpha (373 aa).

The region spanning 11–321 is the Protein kinase domain; that stretch reads YELLTVIGKG…ASTLLNHSFF (311 aa). Over residues 255 to 281 the composition is skewed to polar residues; the sequence is STSRSAANSGLSESLAPSTPRTSNGDS. Residues 255 to 288 are disordered; sequence STSRSAANSGLSESLAPSTPRTSNGDSPSHPYHR. At threonine 361 the chain carries Phosphothreonine; by LKB1.

This sequence belongs to the protein kinase superfamily. STE Ser/Thr protein kinase family. STE20 subfamily. In terms of assembly, component of a trimeric complex composed of STK11/LKB1, STRAD (STRADA or STRADB) and CAB39/MO25 (CAB39/MO25alpha or CAB39L/MO25beta): the complex tethers STK11/LKB1 in the cytoplasm and stimulates its catalytic activity.

The protein localises to the nucleus. The protein resides in the cytoplasm. Functionally, pseudokinase which, in complex with CAB39/MO25 (CAB39/MO25alpha or CAB39L/MO25beta), binds to and activates STK11/LKB1. Adopts a closed conformation typical of active protein kinases and binds STK11/LKB1 as a pseudosubstrate, promoting conformational change of STK11/LKB1 in an active conformation. The chain is STE20-related kinase adapter protein alpha (STRADA) from Bos taurus (Bovine).